A 220-amino-acid chain; its full sequence is Deoxyribose-phosphate aldolase 2 (220 aa).

The active-site Proton donor/acceptor is the D89. The active-site Schiff-base intermediate with acetaldehyde is the K151. The active-site Proton donor/acceptor is the K180.

The protein belongs to the DeoC/FbaB aldolase family. DeoC type 1 subfamily.

It is found in the cytoplasm. It catalyses the reaction 2-deoxy-D-ribose 5-phosphate = D-glyceraldehyde 3-phosphate + acetaldehyde. It participates in carbohydrate degradation; 2-deoxy-D-ribose 1-phosphate degradation; D-glyceraldehyde 3-phosphate and acetaldehyde from 2-deoxy-alpha-D-ribose 1-phosphate: step 2/2. In terms of biological role, catalyzes a reversible aldol reaction between acetaldehyde and D-glyceraldehyde 3-phosphate to generate 2-deoxy-D-ribose 5-phosphate. The sequence is that of Deoxyribose-phosphate aldolase 2 from Staphylococcus aureus (strain N315).